The chain runs to 418 residues: Nucleoside permease NupG (418 aa).

The Cytoplasmic portion of the chain corresponds to 1-4; that stretch reads MNLK. A helical transmembrane segment spans residues 5 to 29; it reads LQLKILSFLQFCLWGSWLTTLGSYM. At 30–36 the chain is on the periplasmic side; that stretch reads FVTLKFD. The chain crosses the membrane as a helical span at residues 37–58; that stretch reads GASIGAVYSSLGIAAVFMPALL. Over 59 to 67 the chain is Cytoplasmic; that stretch reads GIVADKWLS. The chain crosses the membrane as a helical span at residues 68 to 88; it reads AKWVYAICHTIGAITLFMAAQ. Residues 89-91 are Periplasmic-facing; the sequence is VTT. The chain crosses the membrane as a helical span at residues 92-113; the sequence is PEAMFLVILINSFAYMPTLGLI. The Cytoplasmic portion of the chain corresponds to 114–135; that stretch reads NTISYYRLQNAGMDIVTDFPPI. Residues 136-156 form a helical membrane-spanning segment; that stretch reads RIWGTIGFIMAMWVVSLSGFE. Residues 157–158 are Periplasmic-facing; it reads LS. The helical transmembrane segment at 159–178 threads the bilayer; sequence HMQLYIGAALSAILVLFTLT. Topologically, residues 179–209 are cytoplasmic; the sequence is LPHIPVAKQQANQSWTTLLGLDAFALFKNKR. A helical membrane pass occupies residues 210–236; the sequence is MAIFFIFSMLLGAELQITNMFGNTFLH. At 237 to 247 the chain is on the periplasmic side; that stretch reads SFDKDPMFASS. Residues 248-268 traverse the membrane as a helical segment; the sequence is FIVQHASIIMSISQISETLFI. Topologically, residues 269-280 are cytoplasmic; sequence LTIPFFLSRYGI. The helical transmembrane segment at 281 to 300 threads the bilayer; it reads KNVMMISIVAWILRFALFAY. The Periplasmic segment spans residues 301-305; sequence GDPTP. The chain crosses the membrane as a helical span at residues 306-326; that stretch reads FGTVLLVLSMIVYGCAFDFFN. At 327–346 the chain is on the cytoplasmic side; it reads ISGSVFVEKEVSPAIRASAQ. Residues 347–369 traverse the membrane as a helical segment; the sequence is GMFLMMTNGFGCILGGIVSGKVV. Topologically, residues 370–379 are periplasmic; sequence EMYTQNGITD. Residues 380-403 form a helical membrane-spanning segment; that stretch reads WQTVWLIFAGYSVVLAFAFMAMFK. The Cytoplasmic segment spans residues 404–418; that stretch reads YKHVRVPTGTQTVSH.

Belongs to the major facilitator superfamily. Nucleoside:H(+) symporter (NHS) (TC 2.A.1.10) family.

It is found in the cell inner membrane. It carries out the reaction adenosine(in) + H(+)(in) = adenosine(out) + H(+)(out). It catalyses the reaction uridine(in) + H(+)(in) = uridine(out) + H(+)(out). The enzyme catalyses thymidine(in) + H(+)(in) = thymidine(out) + H(+)(out). The catalysed reaction is cytidine(in) + H(+)(in) = cytidine(out) + H(+)(out). It carries out the reaction 2'-deoxycytidine(in) + H(+)(in) = 2'-deoxycytidine(out) + H(+)(out). It catalyses the reaction guanosine(in) + H(+)(in) = guanosine(out) + H(+)(out). The enzyme catalyses inosine(in) + H(+)(in) = inosine(out) + H(+)(out). With respect to regulation, inhibited by the protonophore uncouplers 2,4-dinitrophenol and carbonyl cyanide m-chlorophenylhydrazone (CCCP), and by valinomycin. Inhibited by the nucleoside antibiotic showdomycin. In terms of biological role, broad-specificity transporter of purine and pyrimidine nucleosides. Can transport adenosine, uridine, thymidine, cytidine, deoxycytidine, guanosine and inosine. Can also transport xanthosine, but with a very low affinity. Transport is driven by a proton motive force. This is Nucleoside permease NupG from Escherichia coli (strain K12).